Consider the following 315-residue polypeptide: Transaldolase (315 aa).

The active-site Schiff-base intermediate with substrate is the Lys-128.

Belongs to the transaldolase family. Type 1 subfamily. Homodimer.

The protein localises to the cytoplasm. It catalyses the reaction D-sedoheptulose 7-phosphate + D-glyceraldehyde 3-phosphate = D-erythrose 4-phosphate + beta-D-fructose 6-phosphate. It functions in the pathway carbohydrate degradation; pentose phosphate pathway; D-glyceraldehyde 3-phosphate and beta-D-fructose 6-phosphate from D-ribose 5-phosphate and D-xylulose 5-phosphate (non-oxidative stage): step 2/3. Its function is as follows. Transaldolase is important for the balance of metabolites in the pentose-phosphate pathway. The polypeptide is Transaldolase (Opitutus terrae (strain DSM 11246 / JCM 15787 / PB90-1)).